The chain runs to 104 residues: Large ribosomal subunit protein bL21 (104 aa).

Belongs to the bacterial ribosomal protein bL21 family. In terms of assembly, part of the 50S ribosomal subunit. Contacts protein L20.

In terms of biological role, this protein binds to 23S rRNA in the presence of protein L20. The sequence is that of Large ribosomal subunit protein bL21 from Azobacteroides pseudotrichonymphae genomovar. CFP2.